A 432-amino-acid chain; its full sequence is Glutamate-1-semialdehyde 2,1-aminomutase 2 (432 aa).

Position 268 is an N6-(pyridoxal phosphate)lysine (Lys-268).

The protein belongs to the class-III pyridoxal-phosphate-dependent aminotransferase family. HemL subfamily. In terms of assembly, homodimer. Pyridoxal 5'-phosphate serves as cofactor.

The protein resides in the cytoplasm. The catalysed reaction is (S)-4-amino-5-oxopentanoate = 5-aminolevulinate. It participates in porphyrin-containing compound metabolism; protoporphyrin-IX biosynthesis; 5-aminolevulinate from L-glutamyl-tRNA(Glu): step 2/2. The sequence is that of Glutamate-1-semialdehyde 2,1-aminomutase 2 from Listeria monocytogenes serovar 1/2a (strain ATCC BAA-679 / EGD-e).